We begin with the raw amino-acid sequence, 797 residues long: MKTRGFSFPRQRQVLFLFLFWGVSLAGSGFGRYSVTEETEKGSFVVNLAKDLGLAEGKLAARGTRVVSDDNKQYLLLDSHTGNLLTNEKLDREKLCGPKEPCMLYFQILMDDPFQIYRAELRVRDINDHSPVFRHKEMVLKISENTAEGTAFRLERAQDPDEGHNSIQNYTISPNSFFHIKISGSDEGMIYPELVLDKALDREEQEELSLTLTALDGGSPSRSGTSTIRIVVLDVNDNAPQFAQALYETQAPENSPVGSRIVKVSAGDADSGVNAEVSYSFFDASEDILTTFQINPSSGEIFLRELLDYELVNSYKRNIQAMDGGGLSARCTVLIKVLDSNDNPPELIISSLSNSVAENSPGIVLAVFKIKDRDSGENGKTICYVQDNLPFFLKPSVDNFYILMTEGALDRESKAEYNITITVTDLGTPRLKTEHSITLQVSDVNDNAPAFTQTSYTLFVRENNSPALHVGSVSPTDGDSGTNAQVTYSLLPPQDPHLPLASLVSINADNGHLFALRSLDYEALQAFEFRVGATDRGSPALSSEALVRVLVLDANDNSPFVLYPLQNGSAPCTELVPRAAEPGYLVTKVVAVDGDSGQNAWLSYQLLKATEPGLFGVWAHNGEVRTARLLSERDAAKHRLVVLVKDNGEPPRSATATLHVLLVDGFSQPYLPLPEAAPAQAQADSLTVYLVVALASVSSLFLLSVLLFVAVRLCRRSRAASVGRCSVPEGPFPGHLVDVSGTGTLFQSYQYEVCLTGGSETGEFKFLKPITRHLPPHRVGKEIEENSTLHNSFGFNY.

The first 26 residues, M1 to A26, serve as a signal peptide directing secretion. The Extracellular portion of the chain corresponds to G27–L690. Cadherin domains lie at V35–F133, M138–F242, Y247–L347, L352–F451, and Y456–V561. N169 carries an N-linked (GlcNAc...) asparagine glycan. N418 is a glycosylation site (N-linked (GlcNAc...) asparagine). N567 carries N-linked (GlcNAc...) asparagine glycosylation. The Cadherin 6 domain occupies G568–L671. Residues V691–V711 form a helical membrane-spanning segment. The Cytoplasmic portion of the chain corresponds to R712–Y797.

The protein localises to the cell membrane. In terms of biological role, potential calcium-dependent cell-adhesion protein. May be involved in the establishment and maintenance of specific neuronal connections in the brain. The protein is Protocadherin beta-9 (PCDHB9) of Pan troglodytes (Chimpanzee).